Here is a 283-residue protein sequence, read N- to C-terminus: MFS-type transporter eupM (283 aa).

7 consecutive transmembrane segments (helical) span residues 68–88 (LVAW…WGAM), 111–131 (IAWI…VAGP), 136–156 (GGFK…YMML), 165–185 (VLLA…TPMI), 196–216 (IGLA…VYPI), 227–247 (FAWT…IPII), and 263–283 (LIDL…ATMI).

This sequence belongs to the major facilitator superfamily. Monocarboxylate porter (TC 2.A.1.13) family.

The protein resides in the membrane. MFS-type transporter; part of the gene cluster that mediates the biosynthesis of eupenifeldin, a bistropolone meroterpenoid that acts as an antitumor agent. In Phoma sp, this protein is MFS-type transporter eupM.